The following is a 285-amino-acid chain: Acetylglutamate kinase (285 aa).

Residues 64–65, Arg86, and Asn181 contribute to the substrate site; that span reads GG.

This sequence belongs to the acetylglutamate kinase family. ArgB subfamily.

It is found in the cytoplasm. The catalysed reaction is N-acetyl-L-glutamate + ATP = N-acetyl-L-glutamyl 5-phosphate + ADP. It participates in amino-acid biosynthesis; L-arginine biosynthesis; N(2)-acetyl-L-ornithine from L-glutamate: step 2/4. Functionally, catalyzes the ATP-dependent phosphorylation of N-acetyl-L-glutamate. This chain is Acetylglutamate kinase, found in Clostridium beijerinckii (strain ATCC 51743 / NCIMB 8052) (Clostridium acetobutylicum).